Reading from the N-terminus, the 308-residue chain is Protoheme IX farnesyltransferase (308 aa).

Helical transmembrane passes span 31–51, 53–73, 102–122, 124–144, 149–169, 170–190, 240–260, and 288–308; these read VIEL…RGTV, PLLI…ANAL, NALV…WWTT, LLSG…YTLL, TSQN…IGWS, AVTG…FFWT, LALA…VWFL, and YLAV…PHLF.

Belongs to the UbiA prenyltransferase family. Protoheme IX farnesyltransferase subfamily.

It is found in the cell membrane. It carries out the reaction heme b + (2E,6E)-farnesyl diphosphate + H2O = Fe(II)-heme o + diphosphate. It functions in the pathway porphyrin-containing compound metabolism; heme O biosynthesis; heme O from protoheme: step 1/1. Converts heme B (protoheme IX) to heme O by substitution of the vinyl group on carbon 2 of heme B porphyrin ring with a hydroxyethyl farnesyl side group. The chain is Protoheme IX farnesyltransferase from Mycobacterium avium (strain 104).